A 353-amino-acid chain; its full sequence is Photosystem II D2 protein (353 aa).

Residue Thr-2 is modified to N-acetylthreonine. Thr-2 is modified (phosphothreonine). The helical transmembrane segment at 41 to 61 threads the bilayer; sequence CAYFALGGWFTGTTFVTSWYT. Position 118 (His-118) interacts with chlorophyll a. A helical membrane pass occupies residues 125–141; the sequence is GFMLRQFELARSVQLRP. Positions 130 and 143 each coordinate pheophytin a. A helical membrane pass occupies residues 153–166; sequence VFVSVFLIYPLGQS. His-198 is a chlorophyll a binding site. The chain crosses the membrane as a helical span at residues 208–228; the sequence is AALLCAIHGATVENTLFEDGD. 2 residues coordinate a plastoquinone: His-215 and Phe-262. A Fe cation-binding site is contributed by His-215. His-269 is a binding site for Fe cation. The chain crosses the membrane as a helical span at residues 279-295; it reads GLWMSALGVVGLALNLR.

Belongs to the reaction center PufL/M/PsbA/D family. In terms of assembly, PSII is composed of 1 copy each of membrane proteins PsbA, PsbB, PsbC, PsbD, PsbE, PsbF, PsbH, PsbI, PsbJ, PsbK, PsbL, PsbM, PsbT, PsbX, PsbY, PsbZ, Psb30/Ycf12, at least 3 peripheral proteins of the oxygen-evolving complex and a large number of cofactors. It forms dimeric complexes. The cofactor is The D1/D2 heterodimer binds P680, chlorophylls that are the primary electron donor of PSII, and subsequent electron acceptors. It shares a non-heme iron and each subunit binds pheophytin, quinone, additional chlorophylls, carotenoids and lipids. There is also a Cl(-1) ion associated with D1 and D2, which is required for oxygen evolution. The PSII complex binds additional chlorophylls, carotenoids and specific lipids..

It is found in the plastid. The protein resides in the chloroplast thylakoid membrane. The catalysed reaction is 2 a plastoquinone + 4 hnu + 2 H2O = 2 a plastoquinol + O2. Its function is as follows. Photosystem II (PSII) is a light-driven water:plastoquinone oxidoreductase that uses light energy to abstract electrons from H(2)O, generating O(2) and a proton gradient subsequently used for ATP formation. It consists of a core antenna complex that captures photons, and an electron transfer chain that converts photonic excitation into a charge separation. The D1/D2 (PsbA/PsbD) reaction center heterodimer binds P680, the primary electron donor of PSII as well as several subsequent electron acceptors. D2 is needed for assembly of a stable PSII complex. This is Photosystem II D2 protein from Nuphar advena (Common spatterdock).